Here is a 145-residue protein sequence, read N- to C-terminus: Small ribosomal subunit protein bS6 (145 aa).

Basic and acidic residues predominate over residues 113 to 132 (ENMKKNERKAPKEPVKKDEE). Residues 113–145 (ENMKKNERKAPKEPVKKDEEENKESEEEITSEE) form a disordered region. The span at 133-145 (ENKESEEEITSEE) shows a compositional bias: acidic residues.

It belongs to the bacterial ribosomal protein bS6 family.

In terms of biological role, binds together with bS18 to 16S ribosomal RNA. This Campylobacter hominis (strain ATCC BAA-381 / DSM 21671 / CCUG 45161 / LMG 19568 / NCTC 13146 / CH001A) protein is Small ribosomal subunit protein bS6.